The sequence spans 177 residues: DELTA-stichotoxin-Hcr4b (177 aa).

The plays an important role in the hemolytic activity stretch occupies residues 3–12 (ALAGTITLGA). Residues 11 to 30 (GASLGFQILDKVLGELGKVS) form an N-terminal region region. Residues serine 54, valine 87, serine 105, proline 107, tyrosine 133, tyrosine 137, and tyrosine 138 each coordinate phosphocholine. Positions 105–120 (SVPFDYNLYSNWWDVK) are trp-rich region, which is important for the binding to lipid membrane.

It belongs to the actinoporin family. Sea anemone subfamily. Octamer or nonamer in membranes. Monomer in the soluble state.

The protein localises to the secreted. The protein resides in the nematocyst. It is found in the target cell membrane. In terms of biological role, pore-forming protein that forms cations-selective hydrophilic pores of around 1 nm and causes cardiac stimulation and cytolysis. Pore formation is a multi-step process that involves specific recognition of membrane sphingomyelin (but neither cholesterol nor phosphatidylcholine) using aromatic rich region and adjacent phosphocholine (POC) binding site, firm binding to the membrane (mainly driven by hydrophobic interactions) accompanied by the transfer of the N-terminal region to the lipid-water interface and finally pore formation after oligomerization of monomers. Cytolytic effects include red blood cells hemolysis, platelet aggregation and lysis, cytotoxic and cytostatic effects on fibroblasts. Lethality in mammals has been ascribed to severe vasospasm of coronary vessels, cardiac arrhythmia, and inotropic effects. Preincubation with exogenous sphingomyeline causes complete loss of hemolytic activity. The protein is DELTA-stichotoxin-Hcr4b of Radianthus crispa (Leathery sea anemone).